A 202-amino-acid chain; its full sequence is MSTTARKVISQGLQYMMLNEYLQRQLVRANYVHAQFFKTPIGTKVIVYAGVPGLVIGRKGANIKAIAEVLEREFGIENPQIDVVEVPNQDLNAKIMAYRVARALVRGVRFRRAALVALNRIMAAGARGAEIVISGKLTSQRHRTEKFTRGYVPKSGEPGEELVDEAIVHVLLKLGMYGVKVRIMKPAKMPDTILIKGVTQVG.

A KH type-2 domain is found at 18–87 (LNEYLQRQLV…NPQIDVVEVP (70 aa)).

This sequence belongs to the universal ribosomal protein uS3 family. Part of the 30S ribosomal subunit.

Functionally, binds the lower part of the 30S subunit head. This chain is Small ribosomal subunit protein uS3, found in Thermofilum pendens (strain DSM 2475 / Hrk 5).